A 228-amino-acid chain; its full sequence is Small ribosomal subunit protein uS7A (228 aa).

Belongs to the universal ribosomal protein uS7 family.

The polypeptide is Small ribosomal subunit protein uS7A (RpS5a) (Drosophila melanogaster (Fruit fly)).